Reading from the N-terminus, the 92-residue chain is MADQLTLEIISAINKLVKAENGERTSVALGEITTDTELTSLGIDSLGLADVLWDLEQLYGIKIEMNTADAWSNLNNIGDVVEAVRGLLTKEV.

Residues 4–88 form the Carrier domain; the sequence is QLTLEIISAI…DVVEAVRGLL (85 aa). O-(pantetheine 4'-phosphoryl)serine is present on serine 45.

In terms of processing, 4'-phosphopantetheine is transferred from CoA to a specific serine of apo-NodF.

Functionally, proposed to synthesize nod factor fatty acyl chain. Involved in trans-2,trans-4,trans-6,cis-11-octadecatetraenoic acid biosynthesis. This chain is Nodulation protein F (nodF), found in Rhizobium leguminosarum bv. viciae.